A 581-amino-acid chain; its full sequence is Multicopper oxidase LPR1 (581 aa).

Residues 1–28 (MESLLCRRRIKRVMVLIIALTWLRSTCG) form the signal peptide. Cu cation is bound by residues histidine 148, histidine 150, histidine 196, and histidine 198. Asparagine 254, asparagine 298, asparagine 386, and asparagine 458 each carry an N-linked (GlcNAc...) asparagine glycan. Residues 283-352 (PRLNVRRRKY…DVVVDFYKSP (70 aa)) form the Plastocyanin-like domain. Residues histidine 464, histidine 467, and histidine 469 each coordinate Cu cation. N-linked (GlcNAc...) asparagine glycosylation is present at asparagine 546. Cu cation contacts are provided by histidine 562, cysteine 563, histidine 564, histidine 568, and methionine 573.

The protein belongs to the multicopper oxidase family. Cu cation serves as cofactor.

The protein resides in the endoplasmic reticulum membrane. Functionally, multicopper oxidase that may be involved in copper homeostasis and oxidative stress response, and that is necessary for root growth inhibition by low phosphate conditions. Functions together with LPR2 and PDR2 in a common pathway that adjusts root meristem activity to phosphate availability. Oxidizes the substrate 2,2'-azinobis-(3-ethylbenzthiazoline-6-sulphonate) in vitro. The protein is Multicopper oxidase LPR1 (LPR1) of Arabidopsis thaliana (Mouse-ear cress).